A 290-amino-acid chain; its full sequence is Putative phosphatase MPN_427 (290 aa).

The active-site Nucleophile is Asp-16. Asp-16 provides a ligand contact to Mg(2+). Leu-17 serves as a coordination point for phosphate. Asp-18 contributes to the Mg(2+) binding site. Phosphate-binding positions include 53-54 (TG) and Lys-216. Positions 239 and 240 each coordinate Mg(2+). A phosphate-binding site is contributed by Asn-242.

It belongs to the HAD-like hydrolase superfamily. Cof family. The cofactor is Mg(2+).

This Mycoplasma pneumoniae (strain ATCC 29342 / M129 / Subtype 1) (Mycoplasmoides pneumoniae) protein is Putative phosphatase MPN_427.